Consider the following 258-residue polypeptide: Development-specific 25 kDa protein (258 aa).

10–34 (VYVGGFSGFGYQVCQMMMKKPMKHL) contributes to the NAD(+) binding site. S138 contributes to the substrate binding site. Y151 acts as the Proton acceptor in catalysis.

This sequence belongs to the short-chain dehydrogenases/reductases (SDR) family.

This is Development-specific 25 kDa protein from Sarcophaga peregrina (Flesh fly).